A 75-amino-acid polypeptide reads, in one-letter code: DNA-directed RNA polymerase subunit omega (75 aa).

This sequence belongs to the RNA polymerase subunit omega family. In cyanobacteria the RNAP catalytic core is composed of 2 alpha, 1 beta, 1 beta', 1 gamma and 1 omega subunit. When a sigma factor is associated with the core the holoenzyme is formed, which can initiate transcription.

It carries out the reaction RNA(n) + a ribonucleoside 5'-triphosphate = RNA(n+1) + diphosphate. Its function is as follows. Promotes RNA polymerase assembly. Latches the N- and C-terminal regions of the beta' subunit thereby facilitating its interaction with the beta and alpha subunits. In Parasynechococcus marenigrum (strain WH8102), this protein is DNA-directed RNA polymerase subunit omega.